Consider the following 302-residue polypeptide: Nodulation protein D 3 (302 aa).

The 58-residue stretch at 6–63 (LDLNLLVALDALMIERNLTAAARSINLSQPAMSAAVRRLRSYFRDELFTMRGREFVPT) folds into the HTH lysR-type domain. The segment at residues 23-42 (LTAAARSINLSQPAMSAAVR) is a DNA-binding region (H-T-H motif).

Belongs to the LysR transcriptional regulatory family.

Functionally, nodD regulates the expression of the nodABCFE genes which encode other nodulation proteins. NodD is also a negative regulator of its own expression. Binds flavonoids as inducers. The chain is Nodulation protein D 3 (nodD3) from Rhizobium leguminosarum bv. phaseoli.